A 115-amino-acid chain; its full sequence is ATP synthase subunits region ORF 7 (115 aa).

This is ATP synthase subunits region ORF 7 from Fuscovulum blasticum (Rhodobacter blasticus).